Consider the following 432-residue polypeptide: Mannan endo-1,4-beta-mannosidase 1 (432 aa).

Positions methionine 1–alanine 28 are cleaved as a signal peptide. 2 residues coordinate substrate: tryptophan 93 and asparagine 209. Residue glutamate 210 is the Proton donor of the active site. Tyrosine 289 is a binding site for substrate. The Nucleophile role is filled by glutamate 329. Tryptophan 371 contributes to the substrate binding site.

It belongs to the glycosyl hydrolase 5 (cellulase A) family. Ubiquitous.

It localises to the secreted. The catalysed reaction is Random hydrolysis of (1-&gt;4)-beta-D-mannosidic linkages in mannans, galactomannans and glucomannans.. The protein is Mannan endo-1,4-beta-mannosidase 1 (MAN1) of Oryza sativa subsp. japonica (Rice).